Consider the following 41-residue polypeptide: Large ribosomal subunit protein bL36 (41 aa).

It belongs to the bacterial ribosomal protein bL36 family.

The protein is Large ribosomal subunit protein bL36 of Chelativorans sp. (strain BNC1).